A 675-amino-acid polypeptide reads, in one-letter code: UvrABC system protein B (675 aa).

The Helicase ATP-binding domain maps to 32–417 (EGLSDGLAYQ…EHAGQVVEQV (386 aa)). An ATP-binding site is contributed by 45 to 52 (GVTGSGKT). The Beta-hairpin motif lies at 98–121 (YYDYYQPEAYVPSRDLFIEKDSAI). The Helicase C-terminal domain maps to 436-602 (QVDDLMSEIN…QIKKQVKDII (167 aa)). One can recognise a UVR domain in the interval 634 to 669 (IKEIAKLEKAMQQAARDLQFEEAAVLRDRIRNIKEN).

It belongs to the UvrB family. As to quaternary structure, forms a heterotetramer with UvrA during the search for lesions. Interacts with UvrC in an incision complex.

It is found in the cytoplasm. Functionally, the UvrABC repair system catalyzes the recognition and processing of DNA lesions. A damage recognition complex composed of 2 UvrA and 2 UvrB subunits scans DNA for abnormalities. Upon binding of the UvrA(2)B(2) complex to a putative damaged site, the DNA wraps around one UvrB monomer. DNA wrap is dependent on ATP binding by UvrB and probably causes local melting of the DNA helix, facilitating insertion of UvrB beta-hairpin between the DNA strands. Then UvrB probes one DNA strand for the presence of a lesion. If a lesion is found the UvrA subunits dissociate and the UvrB-DNA preincision complex is formed. This complex is subsequently bound by UvrC and the second UvrB is released. If no lesion is found, the DNA wraps around the other UvrB subunit that will check the other stand for damage. This Neisseria gonorrhoeae protein is UvrABC system protein B.